Here is a 394-residue protein sequence, read N- to C-terminus: Actin-related protein 2 (394 aa).

Methionine 1 carries the post-translational modification N-acetylmethionine. ATP is bound by residues 160-162 (GDG) and 214-218 (RMIKE). Residue lysine 299 is modified to N6-acetyllysine. ATP is bound at residue 305-310 (GGSTMY). Lysine 322 is modified (N6-acetyllysine).

The protein belongs to the actin family. ARP2 subfamily. In terms of assembly, component of the Arp2/3 complex composed of ACTR2/ARP2, ACTR3/ARP3, ARPC1B/p41-ARC, ARPC2/p34-ARC, ARPC3/p21-ARC, ARPC4/p20-ARC and ARPC5/p16-ARC.

Its subcellular location is the cytoplasm. It is found in the cytoskeleton. The protein localises to the cell projection. It localises to the nucleus. Its function is as follows. ATP-binding component of the Arp2/3 complex, a multiprotein complex that mediates actin polymerization upon stimulation by nucleation-promoting factor (NPF). The Arp2/3 complex mediates the formation of branched actin networks in the cytoplasm, providing the force for cell motility. Seems to contact the pointed end of the daughter actin filament. In addition to its role in the cytoplasmic cytoskeleton, the Arp2/3 complex also promotes actin polymerization in the nucleus, thereby regulating gene transcription and repair of damaged DNA. The Arp2/3 complex promotes homologous recombination (HR) repair in response to DNA damage by promoting nuclear actin polymerization, leading to drive motility of double-strand breaks (DSBs). This is Actin-related protein 2 (Actr2) from Rattus norvegicus (Rat).